We begin with the raw amino-acid sequence, 767 residues long: Golgin subfamily A member 1 (767 aa).

The segment at Thr13–Ser58 is disordered. Residues Ser30, Ser36, Ser41, Ser47, Ser50, and Ser51 each carry the phosphoserine modification. Residues Ser50–Ile657 adopt a coiled-coil conformation. The 50-residue stretch at Thr688–Thr737 folds into the GRIP domain. The segment at Lys748 to Ser767 is disordered.

Interacts with RAB6A. Directly interacts with TBC1D23. Interacts with FAM91A1; this interaction may be mediated by TBC1D23. Interacts with ARL1; this interaction recruits Golgin-97/GOLGA1 onto the Golgi apparatus. Post-translationally, MARylated by PARP12; MARylation is required for basolateral export of E-Cadherin.

It localises to the golgi apparatus membrane. The protein localises to the golgi apparatus. The protein resides in the trans-Golgi network membrane. Its subcellular location is the cytoplasmic vesicle. It is found in the secretory vesicle. It localises to the acrosome. Involved in vesicular trafficking at the Golgi apparatus level. Involved in endosome-to-Golgi trafficking. Mechanistically, captures transport vesicles arriving from endosomes via the protein TBC1D23. Recognized vesicles are then tethered to the trans-Golgi before subsequent SNARE engagement and vesicle fusion. Selectively regulates E-cadherin transport from the trans-Golgi network in tubulovesicular carriers. Functionally, (Microbial infection) Plays an important role in poxvirus morphogenesis. Translocates into the viral factories where it may transport the membrane fragments and associated protein factors important for virus maturation to the sites of virion assembly. The protein is Golgin subfamily A member 1 (GOLGA1) of Homo sapiens (Human).